The chain runs to 466 residues: Probable fibrosin-1 (466 aa).

Lys-8 is covalently cross-linked (Glycyl lysine isopeptide (Lys-Gly) (interchain with G-Cter in SUMO2)). Residues Arg-229 and Arg-239 each carry the asymmetric dimethylarginine modification. Disordered stretches follow at residues Ala-236 to Ala-315 and Leu-410 to Arg-466. Basic and acidic residues predominate over residues Gly-248–Pro-272. Position 281 is a phosphoserine (Ser-281). The span at Arg-288–Ala-311 shows a compositional bias: basic and acidic residues. The span at Ala-442–Pro-459 shows a compositional bias: pro residues.

This Mus musculus (Mouse) protein is Probable fibrosin-1 (Fbrs).